Reading from the N-terminus, the 173-residue chain is Co-chaperone protein HscB homolog (173 aa).

One can recognise a J domain in the interval 5 to 77 (CHYALFDLQP…PRRARYLLAI (73 aa)).

The protein belongs to the HscB family. Interacts with HscA and stimulates its ATPase activity.

Its function is as follows. Co-chaperone involved in the maturation of iron-sulfur cluster-containing proteins. Seems to help targeting proteins to be folded toward HscA. This Pseudomonas entomophila (strain L48) protein is Co-chaperone protein HscB homolog.